The chain runs to 556 residues: ATP synthase subunit beta-2, mitochondrial (556 aa).

Residues 1-20 show a composition bias toward low complexity; sequence MASRRVLSSLLRSSSGRSAA. The tract at residues 1–37 is disordered; sequence MASRRVLSSLLRSSSGRSAAKLVNRNPRLPSPSPARH. The N-terminal 51 residues, 1–51, are a transit peptide targeting the mitochondrion; it reads MASRRVLSSLLRSSSGRSAAKLVNRNPRLPSPSPARHAAPCSYLLGRVAEY. At Ser-59 the chain carries Phosphoserine. 231–238 serves as a coordination point for ATP; it reads GGAGVGKT.

It belongs to the ATPase alpha/beta chains family. In terms of assembly, F-type ATPases have 2 components, CF(1) - the catalytic core - and CF(0) - the membrane proton channel. CF(1) has five subunits: alpha(3), beta(3), gamma(1), delta(1), epsilon(1). CF(0) has three main subunits: a, b and c.

It localises to the mitochondrion. The protein localises to the mitochondrion inner membrane. The enzyme catalyses ATP + H2O + 4 H(+)(in) = ADP + phosphate + 5 H(+)(out). Mitochondrial membrane ATP synthase (F(1)F(0) ATP synthase or Complex V) produces ATP from ADP in the presence of a proton gradient across the membrane which is generated by electron transport complexes of the respiratory chain. F-type ATPases consist of two structural domains, F(1) - containing the extramembraneous catalytic core, and F(0) - containing the membrane proton channel, linked together by a central stalk and a peripheral stalk. During catalysis, ATP synthesis in the catalytic domain of F(1) is coupled via a rotary mechanism of the central stalk subunits to proton translocation. Subunits alpha and beta form the catalytic core in F(1). Rotation of the central stalk against the surrounding alpha(3)beta(3) subunits leads to hydrolysis of ATP in three separate catalytic sites on the beta subunits. In Arabidopsis thaliana (Mouse-ear cress), this protein is ATP synthase subunit beta-2, mitochondrial.